The sequence spans 524 residues: Peptide chain release factor 3 (524 aa).

The tr-type G domain maps to 8 to 276 (NKRRTFAIIS…GFAKYAPAPE (269 aa)). GTP is bound by residues 17–24 (SHPDAGKT), 85–89 (DTPGH), and 139–142 (NKLD).

The protein belongs to the TRAFAC class translation factor GTPase superfamily. Classic translation factor GTPase family. PrfC subfamily.

Its subcellular location is the cytoplasm. Increases the formation of ribosomal termination complexes and stimulates activities of RF-1 and RF-2. It binds guanine nucleotides and has strong preference for UGA stop codons. It may interact directly with the ribosome. The stimulation of RF-1 and RF-2 is significantly reduced by GTP and GDP, but not by GMP. The chain is Peptide chain release factor 3 from Hydrogenovibrio crunogenus (strain DSM 25203 / XCL-2) (Thiomicrospira crunogena).